Here is a 48-residue protein sequence, read N- to C-terminus: Sperm protamine R3 isoform 1 (48 aa).

Residues 1–29 (ARRRHSMKKKRKSVRRRKTRKNQRKRKNS) show a composition bias toward basic residues. The disordered stretch occupies residues 1-48 (ARRRHSMKKKRKSVRRRKTRKNQRKRKNSLGRSFKQHGFLKQPPRFRP).

In terms of tissue distribution, testis.

It localises to the nucleus. The protein resides in the chromosome. Functionally, protamines substitute for histones in the chromatin of sperm during the haploid phase of spermatogenesis. They compact sperm DNA into a highly condensed, stable and inactive complex. The chain is Sperm protamine R3 isoform 1 from Hydrolagus colliei (Spotted ratfish).